A 178-amino-acid chain; its full sequence is MAELLTLARPYAKAAFAYASEQGATDNWSNALQVLSAAVQDEAFSAYLNRPELTPAEQVKLFAKVLGEDQSQAVSNFLTLLADNDRLVLLPEIAAEYEQLKSQNNNNVDVVIESAFPLTAEQEQLLKSALEKRFNSTVTVSVEVKPELIAGVVIRAGDQVIDDSALNKLEKMRTRLLA.

The protein belongs to the ATPase delta chain family. As to quaternary structure, F-type ATPases have 2 components, F(1) - the catalytic core - and F(0) - the membrane proton channel. F(1) has five subunits: alpha(3), beta(3), gamma(1), delta(1), epsilon(1). F(0) has three main subunits: a(1), b(2) and c(10-14). The alpha and beta chains form an alternating ring which encloses part of the gamma chain. F(1) is attached to F(0) by a central stalk formed by the gamma and epsilon chains, while a peripheral stalk is formed by the delta and b chains.

Its subcellular location is the cell inner membrane. Its function is as follows. F(1)F(0) ATP synthase produces ATP from ADP in the presence of a proton or sodium gradient. F-type ATPases consist of two structural domains, F(1) containing the extramembraneous catalytic core and F(0) containing the membrane proton channel, linked together by a central stalk and a peripheral stalk. During catalysis, ATP synthesis in the catalytic domain of F(1) is coupled via a rotary mechanism of the central stalk subunits to proton translocation. Functionally, this protein is part of the stalk that links CF(0) to CF(1). It either transmits conformational changes from CF(0) to CF(1) or is implicated in proton conduction. The chain is ATP synthase subunit delta from Acinetobacter baumannii (strain AB307-0294).